Here is a 284-residue protein sequence, read N- to C-terminus: MKRRVETITFDGGTLEYSVTGKGTPILVMHGGHSNCYEEFGYTALIEQGYSIITPSRPGYGRTSKEIGKSLANACRFYVKLLDHLQIESVHVIAISAGGPSGICFASHYPERVNTLTLQSAVTKEWLTPKDTEYKLGEILFRPPVEKWIWKLISSLNNAFPRLMFRAMSPQFSTLPFQRIKSLMNEKDIEAFRKMNSRQRSGEGFLIDLSQTAAVSLKDLQAIICPVLIMQSVYDGLVDLSHAHHAKEHIRGAVLCLLHSWGHLIWLGKEAAETGSILLGFLES.

One can recognise an AB hydrolase-1 domain in the interval 25 to 123; sequence PILVMHGGHS…NTLTLQSAVT (99 aa). Ser-96 is a catalytic residue.

It belongs to the AB hydrolase superfamily.

This is an uncharacterized protein from Bacillus subtilis (strain 168).